The following is a 283-amino-acid chain: Thymidylate synthase (283 aa).

R22 contributes to the dUMP binding site. The Nucleophile role is filled by C160. Residues 180–183 (RSCD), N191, and 221–223 (HIY) each bind dUMP. D183 serves as a coordination point for (6R)-5,10-methylene-5,6,7,8-tetrahydrofolate. S282 serves as a coordination point for (6R)-5,10-methylene-5,6,7,8-tetrahydrofolate.

It belongs to the thymidylate synthase family. Bacterial-type ThyA subfamily. In terms of assembly, homodimer.

It is found in the cytoplasm. It catalyses the reaction dUMP + (6R)-5,10-methylene-5,6,7,8-tetrahydrofolate = 7,8-dihydrofolate + dTMP. It functions in the pathway pyrimidine metabolism; dTTP biosynthesis. Functionally, catalyzes the reductive methylation of 2'-deoxyuridine-5'-monophosphate (dUMP) to 2'-deoxythymidine-5'-monophosphate (dTMP) while utilizing 5,10-methylenetetrahydrofolate (mTHF) as the methyl donor and reductant in the reaction, yielding dihydrofolate (DHF) as a by-product. This enzymatic reaction provides an intracellular de novo source of dTMP, an essential precursor for DNA biosynthesis. The polypeptide is Thymidylate synthase (Shewanella piezotolerans (strain WP3 / JCM 13877)).